The following is a 436-amino-acid chain: Trigger factor (436 aa).

Residues 161–246 (DDQLNIDFVG…VNSVAEPKLP (86 aa)) form the PPIase FKBP-type domain.

This sequence belongs to the FKBP-type PPIase family. Tig subfamily.

The protein resides in the cytoplasm. It catalyses the reaction [protein]-peptidylproline (omega=180) = [protein]-peptidylproline (omega=0). Involved in protein export. Acts as a chaperone by maintaining the newly synthesized protein in an open conformation. Functions as a peptidyl-prolyl cis-trans isomerase. The polypeptide is Trigger factor (Pseudomonas paraeruginosa (strain DSM 24068 / PA7) (Pseudomonas aeruginosa (strain PA7))).